The sequence spans 401 residues: Argininosuccinate synthase (401 aa).

Residues 7-15 (AYSGGLDTS) and alanine 34 each bind ATP. L-citrulline contacts are provided by tyrosine 85 and serine 90. An ATP-binding site is contributed by glycine 115. Threonine 117, asparagine 121, and aspartate 122 together coordinate L-aspartate. Asparagine 121 is an L-citrulline binding site. 5 residues coordinate L-citrulline: arginine 125, serine 174, serine 183, glutamate 259, and tyrosine 271.

This sequence belongs to the argininosuccinate synthase family. Type 1 subfamily. Homotetramer.

Its subcellular location is the cytoplasm. It catalyses the reaction L-citrulline + L-aspartate + ATP = 2-(N(omega)-L-arginino)succinate + AMP + diphosphate + H(+). Its pathway is amino-acid biosynthesis; L-arginine biosynthesis; L-arginine from L-ornithine and carbamoyl phosphate: step 2/3. The chain is Argininosuccinate synthase from Desulforamulus reducens (strain ATCC BAA-1160 / DSM 100696 / MI-1) (Desulfotomaculum reducens).